The primary structure comprises 61 residues: Large ribosomal subunit protein uL30 (61 aa).

This sequence belongs to the universal ribosomal protein uL30 family. As to quaternary structure, part of the 50S ribosomal subunit.

This chain is Large ribosomal subunit protein uL30, found in Bifidobacterium adolescentis (strain ATCC 15703 / DSM 20083 / NCTC 11814 / E194a).